A 138-amino-acid polypeptide reads, in one-letter code: Small ribosomal subunit protein uS11c (138 aa).

A disordered region spans residues 1–23 (MKKPIPRIGSRRNGRIGSRKNGR).

Belongs to the universal ribosomal protein uS11 family. Part of the 30S ribosomal subunit.

Its subcellular location is the plastid. It is found in the chloroplast. This Amborella trichopoda protein is Small ribosomal subunit protein uS11c.